A 318-amino-acid chain; its full sequence is tRNA-modifying protein YgfZ (318 aa).

2 residues coordinate folate: W24 and W185.

It belongs to the tRNA-modifying YgfZ family.

The protein resides in the cytoplasm. Folate-binding protein involved in regulating the level of ATP-DnaA and in the modification of some tRNAs. It is probably a key factor in regulatory networks that act via tRNA modification, such as initiation of chromosomal replication. The sequence is that of tRNA-modifying protein YgfZ from Buchnera aphidicola subsp. Baizongia pistaciae (strain Bp).